The sequence spans 132 residues: Ribosome-binding factor A (132 aa).

It belongs to the RbfA family. In terms of assembly, monomer. Binds 30S ribosomal subunits, but not 50S ribosomal subunits or 70S ribosomes.

The protein localises to the cytoplasm. One of several proteins that assist in the late maturation steps of the functional core of the 30S ribosomal subunit. Associates with free 30S ribosomal subunits (but not with 30S subunits that are part of 70S ribosomes or polysomes). Required for efficient processing of 16S rRNA. May interact with the 5'-terminal helix region of 16S rRNA. The sequence is that of Ribosome-binding factor A from Burkholderia multivorans (strain ATCC 17616 / 249).